We begin with the raw amino-acid sequence, 484 residues long: Cysteine--tRNA ligase (484 aa).

Residue C29 coordinates Zn(2+). The 'HIGH' region motif lies at 31–41 (ATVQGMPHVGH). Zn(2+) is bound by residues C227, H252, and E256. Residues 283-287 (KMSKS) carry the 'KMSKS' region motif. ATP is bound at residue K286.

This sequence belongs to the class-I aminoacyl-tRNA synthetase family. Monomer. It depends on Zn(2+) as a cofactor.

Its subcellular location is the cytoplasm. The catalysed reaction is tRNA(Cys) + L-cysteine + ATP = L-cysteinyl-tRNA(Cys) + AMP + diphosphate. The polypeptide is Cysteine--tRNA ligase (Paenarthrobacter aurescens (strain TC1)).